A 118-amino-acid chain; its full sequence is Cell division protein FtsB (118 aa).

The Cytoplasmic portion of the chain corresponds to 1–3 (MRL). The chain crosses the membrane as a helical span at residues 4–21 (LFLVLLVLLGLIQYPLWL). The Periplasmic segment spans residues 22-118 (GKGGWFKVWD…PRPPATPPRR (97 aa)). A coiled-coil region spans residues 28-62 (KVWDLQRQVAEQRETNDGLRARNTALEAEVRDLAT). Residues 88–118 (LPPGTPLPSGNSTPQASALSKPRPPATPPRR) form a disordered region. A compositionally biased stretch (polar residues) spans 95–105 (PSGNSTPQASA). Over residues 109-118 (PRPPATPPRR) the composition is skewed to pro residues.

It belongs to the FtsB family. In terms of assembly, part of a complex composed of FtsB, FtsL and FtsQ.

It localises to the cell inner membrane. Essential cell division protein. May link together the upstream cell division proteins, which are predominantly cytoplasmic, with the downstream cell division proteins, which are predominantly periplasmic. The polypeptide is Cell division protein FtsB (Bordetella parapertussis (strain 12822 / ATCC BAA-587 / NCTC 13253)).